We begin with the raw amino-acid sequence, 237 residues long: NAD-dependent protein deacetylase (237 aa).

The 237-residue stretch at Met1–Ala237 folds into the Deacetylase sirtuin-type domain. Positions 18, 22, 29, 30, 95, 98, and 113 each coordinate NAD(+). Nicotinamide is bound at residue Phe29. Residue Asp98 coordinates nicotinamide. The Proton acceptor role is filled by His113. The Zn(2+) site is built by Cys121, Cys124, Cys140, and Cys142. 4 residues coordinate NAD(+): Ser180, Ser181, Asn205, and Ile224.

The protein belongs to the sirtuin family. Class U subfamily. Requires Zn(2+) as cofactor.

It is found in the cytoplasm. The catalysed reaction is N(6)-acetyl-L-lysyl-[protein] + NAD(+) + H2O = 2''-O-acetyl-ADP-D-ribose + nicotinamide + L-lysyl-[protein]. Its function is as follows. NAD-dependent protein deacetylase which modulates the activities of several enzymes which are inactive in their acetylated form. In Halalkalibacterium halodurans (strain ATCC BAA-125 / DSM 18197 / FERM 7344 / JCM 9153 / C-125) (Bacillus halodurans), this protein is NAD-dependent protein deacetylase.